Consider the following 246-residue polypeptide: tRNA pseudouridine synthase A (246 aa).

Catalysis depends on Asp51, which acts as the Nucleophile. Residue Tyr105 participates in substrate binding.

The protein belongs to the tRNA pseudouridine synthase TruA family.

It carries out the reaction uridine(38/39/40) in tRNA = pseudouridine(38/39/40) in tRNA. Formation of pseudouridine at positions 38, 39 and 40 in the anticodon stem and loop of transfer RNAs. This chain is tRNA pseudouridine synthase A, found in Thermoplasma volcanium (strain ATCC 51530 / DSM 4299 / JCM 9571 / NBRC 15438 / GSS1).